Consider the following 205-residue polypeptide: Thymidylate kinase (205 aa).

13-20 (GIDGSGKS) lines the ATP pocket.

The protein belongs to the thymidylate kinase family.

The enzyme catalyses dTMP + ATP = dTDP + ADP. Functionally, phosphorylation of dTMP to form dTDP in both de novo and salvage pathways of dTTP synthesis. The sequence is that of Thymidylate kinase from Leptospira borgpetersenii serovar Hardjo-bovis (strain L550).